The sequence spans 922 residues: Isoleucine--tRNA ligase (922 aa).

The 'HIGH' region motif lies at 57–67; it reads PYANGDIHMGH. Glu553 provides a ligand contact to L-isoleucyl-5'-AMP. Positions 594-598 match the 'KMSKS' region motif; sequence KMSKS. Lys597 serves as a coordination point for ATP. Zn(2+)-binding residues include Cys889, Cys892, Cys909, and Cys912.

Belongs to the class-I aminoacyl-tRNA synthetase family. IleS type 1 subfamily. Monomer. It depends on Zn(2+) as a cofactor.

Its subcellular location is the cytoplasm. The catalysed reaction is tRNA(Ile) + L-isoleucine + ATP = L-isoleucyl-tRNA(Ile) + AMP + diphosphate. Functionally, catalyzes the attachment of isoleucine to tRNA(Ile). As IleRS can inadvertently accommodate and process structurally similar amino acids such as valine, to avoid such errors it has two additional distinct tRNA(Ile)-dependent editing activities. One activity is designated as 'pretransfer' editing and involves the hydrolysis of activated Val-AMP. The other activity is designated 'posttransfer' editing and involves deacylation of mischarged Val-tRNA(Ile). In Bacillus licheniformis (strain ATCC 14580 / DSM 13 / JCM 2505 / CCUG 7422 / NBRC 12200 / NCIMB 9375 / NCTC 10341 / NRRL NRS-1264 / Gibson 46), this protein is Isoleucine--tRNA ligase.